The sequence spans 377 residues: MSVAELKERHMAATQTVNDLREKLKQKRLQLLDTDVSGYAKRQGKSPVTFGPTDLVCCRILQGHTGKVYSLDWTPEKNRIVSASQDGRLIVWNALTSQKTHAIKLPCAWVMTCAFSPSGQSVACGGLDSACSIFNLNSPIDKDGIHPVSRMLSGHKGYVSSCQYVPDEDTHLITSSGDQTCVLWDITTGLRTSVFGGEFQSGHTADVLSVSISSSNPKLFVSGSCDTTARLWDTRVASRAQRTFHGHESDVNTVKFFPDGNRFGTGSDDGSCRLFDIRTGHQLQVYNQPHGDGDIPHVTSMAFSISGRLLFVGYSNGDCYVWDTLLAKVVLNLGSVQNSHEGRISCLGLSADGSALCTGSWDTNLKIWAFGGHRSVV.

7 WD repeats span residues 63–93 (GHTG…IVWN), 105–135 (LPCA…SIFN), 154–185 (GHKG…VLWD), 202–233 (GHTA…RLWD), 246–276 (GHES…RLFD), 293–323 (GDIP…YVWD), and 339–369 (SHEG…KIWA).

The protein belongs to the WD repeat G protein beta family. As to quaternary structure, g proteins are composed of 3 units, alpha, beta and gamma.

Functionally, guanine nucleotide-binding proteins (G proteins) are involved as a modulator or transducer in various transmembrane signaling systems. The beta and gamma chains are required for the GTPase activity, for replacement of GDP by GTP, and for G protein-effector interaction. This chain is Guanine nucleotide-binding protein subunit beta (GB1), found in Solanum tuberosum (Potato).